The primary structure comprises 144 residues: Large ribosomal subunit protein uL15 (144 aa).

A disordered region spans residues 1-57 (MRLNTLSPAPGSKPSAKRVGRGIGSGLGKTCGRGHKGQKSRSGGSVRPGFEGGQMPL). Positions 21 to 31 (RGIGSGLGKTC) are enriched in gly residues.

Belongs to the universal ribosomal protein uL15 family. Part of the 50S ribosomal subunit.

Its function is as follows. Binds to the 23S rRNA. In Photobacterium profundum (strain SS9), this protein is Large ribosomal subunit protein uL15.